A 112-amino-acid polypeptide reads, in one-letter code: MLNEQKCEACSIDAIALSKEEQQSLLLQLSDWQIIERDEIPQLEKVYKFKNFKQAWAFSNKIAELAEDEFHHPSILLEWGKVTITWWSHSIKGLHKNDFICASKCDALAIEE.

The protein belongs to the pterin-4-alpha-carbinolamine dehydratase family.

It catalyses the reaction (4aS,6R)-4a-hydroxy-L-erythro-5,6,7,8-tetrahydrobiopterin = (6R)-L-erythro-6,7-dihydrobiopterin + H2O. This is Putative pterin-4-alpha-carbinolamine dehydratase from Vibrio campbellii (strain ATCC BAA-1116).